Reading from the N-terminus, the 233-residue chain is Ribosome maturation factor RimM (233 aa).

Residues 1 to 51 (MKRKQDSKGAGSRGQGAGEKKQGAGGRGQGEKKQKKSPVPSPQSPVPDPDE) form a disordered region. Residues 11-28 (GSRGQGAGEKKQGAGGRG) show a composition bias toward gly residues. In terms of domain architecture, PRC barrel spans 145–226 (GEDEYHVVDL…RIEITPPPGL (82 aa)).

This sequence belongs to the RimM family. Binds ribosomal protein uS19.

Its subcellular location is the cytoplasm. In terms of biological role, an accessory protein needed during the final step in the assembly of 30S ribosomal subunit, possibly for assembly of the head region. Essential for efficient processing of 16S rRNA. May be needed both before and after RbfA during the maturation of 16S rRNA. It has affinity for free ribosomal 30S subunits but not for 70S ribosomes. The chain is Ribosome maturation factor RimM from Trichormus variabilis (strain ATCC 29413 / PCC 7937) (Anabaena variabilis).